The sequence spans 496 residues: RNA-binding motif protein, Y chromosome, family 1 member D (496 aa).

One can recognise an RRM domain in the interval 8 to 85; the sequence is GKLFIGGLNR…KAIKVEQAKK (78 aa). Disordered regions lie at residues 67–349 and 452–496; these read DMNG…HRDY and KDQR…SSRY. Composition is skewed to low complexity over residues 97–114 and 149–159; these read PASS…SARG and PVKRGPSSRSG. A compositionally biased stretch (polar residues) spans 175–184; sequence NSWMGSQGPM. 6 stretches are compositionally biased toward basic and acidic residues: residues 204 to 214, 242 to 253, 276 to 289, 313 to 326, 335 to 349, and 484 to 496; these read RNDRMSTRHDG, DNGHSNRDEHSS, AYRD…DESY, GYRD…HESY, SSRE…HRDY, and GESR…SSRY.

In terms of assembly, interacts with splicing factor proteins SFRS3/SRP20, TRA2B/SFRS10, KHDRBS1/SAM68 and KHDRBS3. As to expression, testis-specific.

It is found in the nucleus. Its function is as follows. RNA-binding protein which may be involved in spermatogenesis. Required for sperm development, possibly by participating in pre-mRNA splicing in the testis. This chain is RNA-binding motif protein, Y chromosome, family 1 member D (RBMY1D), found in Homo sapiens (Human).